The sequence spans 171 residues: CASP-like protein 0U2 (171 aa).

Residues 1–22 lie on the Cytoplasmic side of the membrane; the sequence is MPVFGLAALKLNWEALSTPKFR. A helical membrane pass occupies residues 23–42; sequence VTFAQWVCSLLMWSLMASYS. Over 43–48 the chain is Extracellular; it reads KHGEFK. A helical transmembrane segment spans residues 49-69; sequence FVVVFGLVMWGLASTYLVYQL. At 70–77 the chain is on the cytoplasmic side; sequence LNGPPLAP. A helical transmembrane segment spans residues 78 to 98; that stretch reads IVEFWANVAAGSLAFICLVLA. The Extracellular portion of the chain corresponds to 99–121; the sequence is SATCNRAVGEPQTKVCSGELKPK. A helical membrane pass occupies residues 122 to 142; sequence ASAAFAFLLLCAYGGLAYLSW. The Cytoplasmic segment spans residues 143-171; it reads RTWRNPPTIASYALHDDPEFAQPLHSSHK.

The protein belongs to the Casparian strip membrane proteins (CASP) family. Homodimer and heterodimers.

The protein localises to the cell membrane. This is CASP-like protein 0U2 from Chlorokybus atmophyticus (Soil alga).